A 636-amino-acid chain; its full sequence is MNTSVDKILSQTAEVDQASVQPFTGSQKIYVQGSRNDIRVPMREISLDDTPTDFGGEKNPPVRVYDTSGPYTDPEVAIDLRAGLPDIRSAWIEERGDTEILSDSQSIFTRERLDDPKLAHLRFNLTRKARRAKPGMNVSQMHYAKKGIITPEMEYIAIRENMALAQVRELGVLNQQHPGMSFGANIPGEITPEFVRSEVARGRAIIPANINHVELEPMIIGRNFLVKINGNIGNSALGSSIEEEVEKLTWGARWGADTVMDLSTGKNIHETREWIIRNSHVPIGTVPIYQALEKVNGIAENLTWEIFRDTLIEQAEQGVDYFTIHAGVLLRYVPLTAKRVTGIVSRGGSIMAKWCLAHHRENFLYTHFEEICEIMKAYDVSFSLGDGLRPGSIADANDAAQFGELETLGELTEIAWKHDVQTMIEGPGHVPMHMIKENMDKQLEVCKEAPFYTLGPLTTDIAPGYDHITSGIGAAMIGWYGCAMLCYVTPKEHLGLPNKKDVKEGIITYKIAAHAADLAKGHPGAQLRDNALSKARFEFRWEDQFNLGLDPDTARAYHDETLPKESAKVAHFCSMCGPKFCSMKITQEVRDYAAQQGVNVEGISEDQLVKMIDVEAEMQEKAREFIEQGAELYHKV.

A disordered region spans residues Asp-48–Pro-70. Substrate contacts are provided by residues Asn-231, Met-260, Tyr-289, His-325, Ser-345–Gly-347, Asp-386–Arg-389, and Glu-425. Residue His-429 participates in Zn(2+) binding. Tyr-452 is a substrate binding site. His-493 provides a ligand contact to Zn(2+). 3 residues coordinate [4Fe-4S] cluster: Cys-573, Cys-576, and Cys-581.

This sequence belongs to the ThiC family. As to quaternary structure, homodimer. The cofactor is [4Fe-4S] cluster.

The catalysed reaction is 5-amino-1-(5-phospho-beta-D-ribosyl)imidazole + S-adenosyl-L-methionine = 4-amino-2-methyl-5-(phosphooxymethyl)pyrimidine + CO + 5'-deoxyadenosine + formate + L-methionine + 3 H(+). Its pathway is cofactor biosynthesis; thiamine diphosphate biosynthesis. Its function is as follows. Catalyzes the synthesis of the hydroxymethylpyrimidine phosphate (HMP-P) moiety of thiamine from aminoimidazole ribotide (AIR) in a radical S-adenosyl-L-methionine (SAM)-dependent reaction. The chain is Phosphomethylpyrimidine synthase from Cellvibrio japonicus (strain Ueda107) (Pseudomonas fluorescens subsp. cellulosa).